Reading from the N-terminus, the 445-residue chain is Endoplasmic reticulum membrane adapter protein XK (445 aa).

The Cytoplasmic portion of the chain corresponds to 1–2 (MK). The chain crosses the membrane as a helical span at residues 3–23 (FPASVLASVFLFVAETMAALY). The Extracellular segment spans residues 24–37 (LSSTYRSAGDRMWQ). A helical membrane pass occupies residues 38–58 (ALTLFFSLMPCTLVQLTLLFV). The Cytoplasmic segment spans residues 59–68 (HRDLSRDRPL). The helical transmembrane segment at 69 to 89 (VLLMHLLQLGPLYRCCEVFCI) threads the bilayer. The Extracellular segment spans residues 90–140 (YCQSDQNEEPYVSITKKRQMPKDGLSEEVEKEVGQSEGKLFTHRSAFSRAS). S115 carries the phosphoserine modification. Residues 141–161 (VIQAFLGSAPQLTLQLYITVL) form a helical membrane-spanning segment. The Cytoplasmic segment spans residues 162 to 170 (EQNITTGRF). The chain crosses the membrane as a helical span at residues 171–191 (IMVLSLLSIVYGALRCNILAI). Topologically, residues 192-207 (KIKYDEYEVKVKPLAY) are extracellular. The chain crosses the membrane as a helical span at residues 208–228 (VCIFLWRSFEIATRVIVLVLF). Over 229 to 234 (TSVLKI) the chain is Cytoplasmic. The chain crosses the membrane as a helical span at residues 235 to 255 (WVVVVILVNFFSFFLYPWILF). The Extracellular segment spans residues 256 to 276 (WNSGSPFPENIEKALTRVGTT). The chain crosses the membrane as a helical span at residues 277 to 297 (IVLGFLTLLYAGINMFCWSAV). At 298–316 (QLKIDNPELISKSQNWYRL) the chain is on the cytoplasmic side. A helical transmembrane segment spans residues 317–337 (LIYYMMRFVENSVLLLLWFFF). Residues 338 to 348 (KTDIYMYVCAP) lie on the Extracellular side of the membrane. The chain crosses the membrane as a helical span at residues 349 to 369 (LLILQLLIGYCTSILFMLVFY). At 370 to 445 (QFFHPCKKLF…IWTAVDLCST (76 aa)) the chain is on the cytoplasmic side.

This sequence belongs to the XK family. In terms of assembly, heterodimer with Kell; disulfide-linked. Interacts with VPS13A.

The protein localises to the endoplasmic reticulum membrane. Recruits the lipid transfer protein VPS13A from lipid droplets to the endoplasmic reticulum (ER) membrane. The protein is Endoplasmic reticulum membrane adapter protein XK of Rattus norvegicus (Rat).